Here is a 502-residue protein sequence, read N- to C-terminus: Probable glycine dehydrogenase (decarboxylating) subunit 2 (502 aa).

Lys273 is modified (N6-(pyridoxal phosphate)lysine).

The protein belongs to the GcvP family. C-terminal subunit subfamily. In terms of assembly, the glycine cleavage system is composed of four proteins: P, T, L and H. In this organism, the P 'protein' is a heterodimer of two subunits. It depends on pyridoxal 5'-phosphate as a cofactor.

It carries out the reaction N(6)-[(R)-lipoyl]-L-lysyl-[glycine-cleavage complex H protein] + glycine + H(+) = N(6)-[(R)-S(8)-aminomethyldihydrolipoyl]-L-lysyl-[glycine-cleavage complex H protein] + CO2. Functionally, the glycine cleavage system catalyzes the degradation of glycine. The P protein binds the alpha-amino group of glycine through its pyridoxal phosphate cofactor; CO(2) is released and the remaining methylamine moiety is then transferred to the lipoamide cofactor of the H protein. The sequence is that of Probable glycine dehydrogenase (decarboxylating) subunit 2 from Staphylococcus epidermidis (strain ATCC 35984 / DSM 28319 / BCRC 17069 / CCUG 31568 / BM 3577 / RP62A).